Here is a 166-residue protein sequence, read N- to C-terminus: Urease accessory protein UreE (166 aa).

The interval 132 to 156 (FQPEHGAYGGGHHHSRHGDEDFNYP) is disordered.

This sequence belongs to the UreE family.

It localises to the cytoplasm. Its function is as follows. Involved in urease metallocenter assembly. Binds nickel. Probably functions as a nickel donor during metallocenter assembly. In Pseudomonas fluorescens (strain ATCC BAA-477 / NRRL B-23932 / Pf-5), this protein is Urease accessory protein UreE.